A 118-amino-acid chain; its full sequence is Large ribosomal subunit protein bL20 (118 aa).

This sequence belongs to the bacterial ribosomal protein bL20 family.

Its function is as follows. Binds directly to 23S ribosomal RNA and is necessary for the in vitro assembly process of the 50S ribosomal subunit. It is not involved in the protein synthesizing functions of that subunit. This Parvibaculum lavamentivorans (strain DS-1 / DSM 13023 / NCIMB 13966) protein is Large ribosomal subunit protein bL20.